Here is a 171-residue protein sequence, read N- to C-terminus: Photosystem I assembly protein Ycf3 (171 aa).

TPR repeat units follow at residues 35 to 68 (AFTY…EVDA), 72 to 105 (SYIL…NPYL), and 120 to 153 (GEQA…APTN).

The protein belongs to the Ycf3 family.

The protein localises to the plastid. Its subcellular location is the chloroplast thylakoid membrane. Functionally, essential for the assembly of the photosystem I (PSI) complex. May act as a chaperone-like factor to guide the assembly of the PSI subunits. This is Photosystem I assembly protein Ycf3 from Nephroselmis olivacea (Green alga).